The chain runs to 554 residues: Hydroxylamine reductase (554 aa).

[2Fe-2S] cluster is bound by residues C3, C6, C18, and C25. Residues H252, E276, C320, C408, C436, C461, E495, and K497 each contribute to the hybrid [4Fe-2O-2S] cluster site. C408 is subject to Cysteine persulfide.

This sequence belongs to the HCP family. [2Fe-2S] cluster is required as a cofactor. Hybrid [4Fe-2O-2S] cluster serves as cofactor.

It localises to the cytoplasm. The enzyme catalyses A + NH4(+) + H2O = hydroxylamine + AH2 + H(+). Its function is as follows. Catalyzes the reduction of hydroxylamine to form NH(3) and H(2)O. The sequence is that of Hydroxylamine reductase from Shewanella baltica (strain OS223).